Here is a 252-residue protein sequence, read N- to C-terminus: Vitamin B12 import ATP-binding protein BtuD (252 aa).

Residues 2-237 (IQIKSLSVGA…EQLESVFNTQ (236 aa)) form the ABC transporter domain. 30–37 (GPNGSGKS) serves as a coordination point for ATP.

It belongs to the ABC transporter superfamily. Vitamin B12 importer (TC 3.A.1.13.1) family. In terms of assembly, the complex is composed of two ATP-binding proteins (BtuD), two transmembrane proteins (BtuC) and a solute-binding protein (BtuF).

It localises to the cell inner membrane. The catalysed reaction is an R-cob(III)alamin(out) + ATP + H2O = an R-cob(III)alamin(in) + ADP + phosphate + H(+). Part of the ABC transporter complex BtuCDF involved in vitamin B12 import. Responsible for energy coupling to the transport system. The polypeptide is Vitamin B12 import ATP-binding protein BtuD (Vibrio atlanticus (strain LGP32) (Vibrio splendidus (strain Mel32))).